The chain runs to 118 residues: Large ribosomal subunit protein bL20 (118 aa).

Belongs to the bacterial ribosomal protein bL20 family.

In terms of biological role, binds directly to 23S ribosomal RNA and is necessary for the in vitro assembly process of the 50S ribosomal subunit. It is not involved in the protein synthesizing functions of that subunit. The sequence is that of Large ribosomal subunit protein bL20 from Photorhabdus laumondii subsp. laumondii (strain DSM 15139 / CIP 105565 / TT01) (Photorhabdus luminescens subsp. laumondii).